We begin with the raw amino-acid sequence, 259 residues long: Glutathione S-transferase domain-containing protein DDB_G0274705 (259 aa).

The GST N-terminal domain occupies 7 to 96 (KIDYIFYTNN…YLAQKFNTFL (90 aa)). The GST C-terminal domain maps to 102 to 232 (NPLENSEVIT…GFKNFNPSLL (131 aa)).

Belongs to the GST superfamily.

The polypeptide is Glutathione S-transferase domain-containing protein DDB_G0274705 (Dictyostelium discoideum (Social amoeba)).